Consider the following 75-residue polypeptide: MLSAGVDSKDLSKRGESLIRQSSNRYLTTVRIAFRAKQRRFDDFDGLLEESSVKPVQRAIVELSDEQDQPDLLPG.

It belongs to the RNA polymerase subunit omega family. As to quaternary structure, in cyanobacteria the RNAP catalytic core is composed of 2 alpha, 1 beta, 1 beta', 1 gamma and 1 omega subunit. When a sigma factor is associated with the core the holoenzyme is formed, which can initiate transcription.

It catalyses the reaction RNA(n) + a ribonucleoside 5'-triphosphate = RNA(n+1) + diphosphate. Functionally, promotes RNA polymerase assembly. Latches the N- and C-terminal regions of the beta' subunit thereby facilitating its interaction with the beta and alpha subunits. In Synechococcus sp. (strain CC9605), this protein is DNA-directed RNA polymerase subunit omega.